Here is a 169-residue protein sequence, read N- to C-terminus: MICOS complex subunit MIC19 (169 aa).

The N-myristoyl glycine moiety is linked to residue Gly2. A CHCH domain is found at 123 to 165; the sequence is ENVCQDNENEIVRCLQENPGRVLKCAPLTEAFEKCVGEFRQQV. 2 consecutive short sequence motifs (cx9C motif) follow at residues 126–136 and 147–157; these read CQDNENEIVRC and CAPLTEAFEKC. 2 cysteine pairs are disulfide-bonded: Cys126-Cys157 and Cys136-Cys147.

This sequence belongs to the MICOS complex subunit Mic19 family. Metazoan Mic19 subfamily. As to quaternary structure, component of the mitochondrial contact site and cristae organizing system (MICOS) complex.

It localises to the mitochondrion inner membrane. Its function is as follows. Plays a role in maintaining mitochondrial morphology. May act as a component of the MICOS complex, a large protein complex of the mitochondria. The chain is MICOS complex subunit MIC19 from Caenorhabditis elegans.